The following is a 919-amino-acid chain: Exostosin-like 3 (919 aa).

The Cytoplasmic portion of the chain corresponds to 1 to 30 (MTGYTMLRNGGAGNGGQTCMLRWSNRIRLT). Residues 1–140 (MTGYTMLRNG…LKNVISQTEH (140 aa)) form a required for interaction with REG3A region. A helical; Signal-anchor for type II membrane protein membrane pass occupies residues 31 to 51 (WLSFTLFVILVFFPLIAHYYL). Over 52 to 919 (TTLDEADEAG…HDKTKCFKFI (868 aa)) the chain is Lumenal. 2 disulfide bridges follow: cysteine 177–cysteine 182 and cysteine 188–cysteine 236. N-linked (GlcNAc...) asparagine glycosylation occurs at asparagine 290. Serine 362 is modified (phosphoserine). An intrachain disulfide couples cysteine 400 to cysteine 415. Asparagine 592 is a glycosylation site (N-linked (GlcNAc...) asparagine). Residues leucine 668, arginine 672, asparagine 697, asparagine 723, arginine 728, aspartate 744, aspartate 745, and aspartate 746 each coordinate UDP-N-acetyl-alpha-D-glucosamine. Aspartate 746 contributes to the Mn(2+) binding site. A glycan (N-linked (GlcNAc...) asparagine) is linked at asparagine 790. A disulfide bond links cysteine 831 and cysteine 879. UDP-N-acetyl-alpha-D-glucosamine-binding residues include glutamate 832, aspartate 833, and arginine 876. The active site involves aspartate 833.

This sequence belongs to the glycosyltransferase 47 family. As to quaternary structure, homodimer; disulfide-linked. Interacts with REG3A. Mn(2+) serves as cofactor. As to expression, ubiquitous. Expressed in keratinocytes. Expressed in pancreas.

Its subcellular location is the endoplasmic reticulum membrane. It localises to the golgi apparatus. It is found in the cell membrane. The protein localises to the nucleus. It carries out the reaction 3-O-(beta-D-GlcA-(1-&gt;3)-beta-D-Gal-(1-&gt;3)-beta-D-Gal-(1-&gt;4)-beta-D-Xyl)-L-seryl-[protein] + UDP-N-acetyl-alpha-D-glucosamine = 3-O-(alpha-D-GlcNAc-(1-&gt;4)-beta-D-GlcA-(1-&gt;3)-beta-D-Gal-(1-&gt;3)-beta-D-Gal-(1-&gt;4)-beta-D-Xyl)-L-seryl-[protein] + UDP + H(+). It participates in glycan metabolism; heparan sulfate biosynthesis. In terms of biological role, glycosyltransferase which regulates the biosynthesis of heparan sulfate (HS). Initiates HS synthesis by transferring the first N-acetyl-alpha-D-glucosamine (alpha-GlcNAc) residue (GlcNAcT-I activity) to the tetrasaccharide linker (GlcA-Gal-Gal-Xyl-)Ser core linker. May also transfer alpha-GlcNAc residues during HS elongation (GlcNAcT-II activity). Lacks glucuronyl transferase II (GlcAT-II) activity. Important for both skeletal development and hematopoiesis, through the formation of HS proteoglycans (HSPGs). Through the synthesis of HS, regulates postnatal pancreatic islet maturation and insulin secretion. Functionally, receptor for REG3A, REG3B and REG3G, induces the activation of downstream signaling pathways such as PI3K-AKT or RAS-RAF-MEK-ERK signaling pathway. Required for the function of REG3A in regulating keratinocyte proliferation and differentiation. Required for the inhibition of skin inflammation mediated by REG3A through the activation of PI3K-AKT-STAT3 pathway. Required for the function of REG3A and REG3G in glucose tolerance in pancreas. Expressed in microglia, is activated by nociceptor-derived REG3G in response to endotoxins, leading to the inhibition of kynurenine pathway to prevent endotoxic death. This chain is Exostosin-like 3, found in Homo sapiens (Human).